The following is a 198-amino-acid chain: Ras-related protein Rab-34, isoform NARR (198 aa).

Tandem repeats lie at residues 7–15 (PRDDVGSPR), 16–24 (PRVIVGTIR), 25–33 (PRVIVGTIR), 34–42 (PRVIVGSAR), 43–51 (ARPPPDGTP), 52–60 (RPQLAAEES), 61–69 (PRPRVIFGT), 70–78 (PRARVILGS), 79–87 (PRPRVIVSS), 88–96 (PWPAVVVAS), 97–105 (PRPRTPVGS), 106–114 (PWPRVVVGT), and 115–123 (PRPRVIVGS). A 13 x 9 AA approximate tandem-repeats of P-R-V-I-V-G-(S/T)-P-R region spans residues 7 to 125 (PRDDVGSPRP…RPRVIVGSPR (119 aa)). Ser13 bears the Phosphoserine mark. The tract at residues 37 to 64 (IVGSARARPPPDGTPRPQLAAEESPRPR) is disordered. Thr69 carries the phosphothreonine modification. Ser78, Ser87, and Ser96 each carry phosphoserine. Low complexity predominate over residues 94-121 (VASPRPRTPVGSPWPRVVVGTPRPRVIV). Residues 94 to 198 (VASPRPRTPV…GAPDRHRGQI (105 aa)) form a disordered region. Ser123 carries the post-translational modification Phosphoserine. Over residues 145-157 (RRQDEHSGTRAEG) the composition is skewed to basic and acidic residues. Residues 161-178 (GGAAPVPEEGGRFARAQR) are compositionally biased toward low complexity.

As to quaternary structure, may interact with EIF5A and ERF1. In terms of processing, phosphorylated during M-phase.

It localises to the nucleus. The protein localises to the nucleolus. The protein is Ras-related protein Rab-34, isoform NARR (RAB34) of Homo sapiens (Human).